A 304-amino-acid chain; its full sequence is 4-diphosphocytidyl-2-C-methyl-D-erythritol kinase (304 aa).

The active site involves lysine 20. 106–116 serves as a coordination point for ATP; it reads PVASGIGGGSG. The active site involves aspartate 148.

Belongs to the GHMP kinase family. IspE subfamily.

It catalyses the reaction 4-CDP-2-C-methyl-D-erythritol + ATP = 4-CDP-2-C-methyl-D-erythritol 2-phosphate + ADP + H(+). Its pathway is isoprenoid biosynthesis; isopentenyl diphosphate biosynthesis via DXP pathway; isopentenyl diphosphate from 1-deoxy-D-xylulose 5-phosphate: step 3/6. Functionally, catalyzes the phosphorylation of the position 2 hydroxy group of 4-diphosphocytidyl-2C-methyl-D-erythritol. The polypeptide is 4-diphosphocytidyl-2-C-methyl-D-erythritol kinase (Bartonella bacilliformis (strain ATCC 35685 / KC583 / Herrer 020/F12,63)).